The sequence spans 1003 residues: Phosphatidylinositol 4,5-bisphosphate 5-phosphatase A (1003 aa).

Disordered stretches follow at residues 1 to 110 (MEGQ…AAKS) and 147 to 414 (AMPR…QPTC). Positions 6-11 (RSGSAR) match the RSXSXX motif 1 motif. Over residues 11–24 (RPGTRTGLGPLPGT) the composition is skewed to low complexity. Residue Arg56 is modified to Asymmetric dimethylarginine; alternate. Arg56 is modified (omega-N-methylarginine; alternate). Omega-N-methylarginine is present on Arg65. Arg76 bears the Asymmetric dimethylarginine mark. Arg83 is modified (asymmetric dimethylarginine; alternate). An Omega-N-methylarginine; alternate modification is found at Arg83. Residues 160 to 174 (LTPTSRDQKQLSPTS) show a composition bias toward polar residues. Ser171 bears the Phosphoserine mark. The span at 180–196 (ALATSGLSLALASQEQP) shows a compositional bias: low complexity. The span at 197–210 (PQSPSSPSPVPSPV) shows a compositional bias: pro residues. A compositionally biased stretch (basic and acidic residues) spans 284 to 294 (ARPEAPRHSPE). Residues Ser292 and Ser325 each carry the phosphoserine modification. A compositionally biased stretch (pro residues) spans 338–348 (VPPPLPKPPRS). The SH3-binding signature appears at 346–351 (PRSPSR). Low complexity-rich tracts occupy residues 349–361 (PSRSPSRSPNRSP) and 390–413 (QAQESPAAATTTTSPTSSWSAQPT). An RSXSXX motif 2 motif is present at residues 351-356 (RSPSRS). Residues 422 to 725 (ITVVTWNVGT…SDHKPVAAQF (304 aa)) are catalytic. A required for ruffle localization region spans residues 726–837 (ILQFAFRDDV…IGVTEPFQIS (112 aa)). A disordered region spans residues 839-1003 (PTSESASSST…LGLEEGGLGP (165 aa)). Residues 840–855 (TSESASSSTDSSGTSS) show a composition bias toward low complexity. 2 consecutive short sequence motifs (RSXSXX motif) follow at residues 871–876 (RSPSPG) and 882–887 (RSRSPG). Ser900 is subject to Phosphoserine. Composition is skewed to low complexity over residues 907–919 (SRSPSPQSRQLPR) and 927–943 (SSSSRGSSEEGPSGLPG). Positions 908-913 (RSPSPQ) match the RSXSXX motif 5 motif. Ser987 carries the post-translational modification Phosphoserine.

This sequence belongs to the inositol 1,4,5-trisphosphate 5-phosphatase type II family.

Its subcellular location is the cytoplasm. The catalysed reaction is 1D-myo-inositol 1,4,5-trisphosphate + H2O = 1D-myo-inositol 1,4-bisphosphate + phosphate. It carries out the reaction 1D-myo-inositol 1,3,4,5-tetrakisphosphate + H2O = 1D-myo-inositol 1,3,4-trisphosphate + phosphate. It catalyses the reaction a 1,2-diacyl-sn-glycero-3-phospho-(1D-myo-inositol-4,5-bisphosphate) + H2O = a 1,2-diacyl-sn-glycero-3-phospho-(1D-myo-inositol 4-phosphate) + phosphate. In terms of biological role, inositol 5-phosphatase, which converts inositol 1,4,5-trisphosphate to inositol 1,4-bisphosphate. Also converts phosphatidylinositol 4,5-bisphosphate to phosphatidylinositol 4-phosphate and inositol 1,3,4,5-tetrakisphosphate to inositol 1,3,4-trisphosphate in vitro. May be involved in modulation of the function of inositol and phosphatidylinositol polyphosphate-binding proteins that are present at membranes ruffles. This Mus musculus (Mouse) protein is Phosphatidylinositol 4,5-bisphosphate 5-phosphatase A (Inpp5j).